The following is a 267-amino-acid chain: Protein COFACTOR ASSEMBLY OF COMPLEX C SUBUNIT B CCB1, chloroplastic (267 aa).

Residues 1 to 44 constitute a chloroplast transit peptide; the sequence is MATKLISPPLSCPWVTSREVIIKGLPRRRREWMVTKRNRVSAVT. At 45–84 the chain is on the lumenal side; sequence AMIVEPLSVVSSSAIQIHQWWEQNPNSLLLMTEATGGYSL. Residues 85–105 traverse the membrane as a helical segment; that stretch reads ASYYTSLGLFVISVPGLWSLI. Over 106–164 the chain is Stromal; it reads KRSVKSKIVRKTFVVNDVKKEPKQVAGEILSFFTRKNFNITDRGETITFEGKMVPSRGQ. The chain crosses the membrane as a helical span at residues 165-185; the sequence is AALLTFCTCISLASVGLVLTI. Residue T186 is a topological domain, lumenal. A helical membrane pass occupies residues 187 to 207; it reads VPDFGNNWFFIILLSPLAGVY. The Stromal portion of the chain corresponds to 208-267; the sequence is YWKKASRKEEIKVKMMVGSKGRLDEIVVQGDDVQVEEMRKELQLNEKGMVYVKGLFERSS.

It is found in the plastid. The protein localises to the chloroplast thylakoid membrane. Required for the biogenesis and accumulation of native cytochrome b6 in the thylakoid membrane. Controls the conversion of apocytochrome b6 to holocytochrome b6. Required for covalent binding of the c-type heme to cytochrome b6. The protein is Protein COFACTOR ASSEMBLY OF COMPLEX C SUBUNIT B CCB1, chloroplastic of Arabidopsis thaliana (Mouse-ear cress).